A 274-amino-acid polypeptide reads, in one-letter code: MAIHLYKTSTPSTRNGAVDSQVKSNLRNNLISGQHRCGKGRNARGIITAGHRGGGHKRLYRKIDFRRNEKDISGRIVTIEYDPNRNAYICLIHYGDGEKRYILHPRGAIIGDTIVSGTEVPISMGNALPLSTDMPLGTAIHNIEITLGKGGQLARAAGAVAKLIAKEGKSATLRLPSGEVRLISKNCLATVGQVGNVGVNQKSLGRAGSKCWLGKRPVVRGVVMNPVDHPHGGGEGRAPIGRKKPTTPWGYPALGRRSRKRKKYSDSFILRRRK.

Residues 225–274 form a disordered region; sequence NPVDHPHGGGEGRAPIGRKKPTTPWGYPALGRRSRKRKKYSDSFILRRRK.

Belongs to the universal ribosomal protein uL2 family. In terms of assembly, part of the 50S ribosomal subunit.

It is found in the plastid. The protein resides in the chloroplast. This is Large ribosomal subunit protein uL2cz/uL2cy (rpl2-A) from Dioscorea elephantipes (Elephant's foot yam).